We begin with the raw amino-acid sequence, 143 residues long: Large ribosomal subunit protein uL11 (143 aa).

It belongs to the universal ribosomal protein uL11 family. In terms of assembly, part of the ribosomal stalk of the 50S ribosomal subunit. Interacts with L10 and the large rRNA to form the base of the stalk. L10 forms an elongated spine to which L12 dimers bind in a sequential fashion forming a multimeric L10(L12)X complex. Post-translationally, one or more lysine residues are methylated.

Functionally, forms part of the ribosomal stalk which helps the ribosome interact with GTP-bound translation factors. This Halorhodospira halophila (strain DSM 244 / SL1) (Ectothiorhodospira halophila (strain DSM 244 / SL1)) protein is Large ribosomal subunit protein uL11.